The following is a 370-amino-acid chain: MKKGFSLPLWVAGAARSALKKLVGLSFENYELIKIPYEKKEIKIEIHSVGLLKNDSHALGITFAKSGLDLDITQNLEIWTIASLEKISFENSLQRVPINIIAGSGVGIKEDTSEICISNFAKEVLYENLLDIIPEGFNLKLEIIFPNGAFLAERTSNQSFGIVDGLSIIGTSAETYSSASPDQLEEAKNNLAKLIQNDFKGEVVFVIGENGLNLLKTHNVNLPIIKIGNWIGPLLVDAAIKKVKTVILFGYHGKLIKLAGGIFHTHNHLADGRIEILVYLAVQENVPFEIIVKLSKLDNIENALLFLEKFNQSTADKLFKRLSNTIEKRSFAYVNRYVKTDMEIASIIFDRKRKIRWAGIYGKKYISYFQ.

Belongs to the CbiD family.

It carries out the reaction Co-precorrin-5B + S-adenosyl-L-methionine = Co-precorrin-6A + S-adenosyl-L-homocysteine. Its pathway is cofactor biosynthesis; adenosylcobalamin biosynthesis; cob(II)yrinate a,c-diamide from sirohydrochlorin (anaerobic route): step 6/10. Functionally, catalyzes the methylation of C-1 in cobalt-precorrin-5B to form cobalt-precorrin-6A. In Prochlorococcus marinus (strain MIT 9215), this protein is Cobalt-precorrin-5B C(1)-methyltransferase.